A 243-amino-acid chain; its full sequence is MIDIHSHIVFDVDDGPKTLEESLSLIEESYRQGVRIIVSTSHRRKGMFETPEDIIFKNFSIVKHEAEKRFEHLQILYGGELYYTSDMLEKLKLKQIPTLNNTKFALIEFSMQTSWKDIHTALSNVLMLGITPVVAHIERYNSLENQKERVKEIINMGCYTQINSSHILKQKLFNDKHKRFKKRARYFLEENLVHFVASDMHNLDVRPPFLAEAYKIICRDFGKERANQLFIENAQSILKNHYI.

Belongs to the metallo-dependent hydrolases superfamily. CpsB/CapC family. It depends on Mn(2+) as a cofactor.

It carries out the reaction O-phospho-L-tyrosyl-[protein] + H2O = L-tyrosyl-[protein] + phosphate. It participates in capsule biogenesis; capsule polysaccharide biosynthesis. In terms of biological role, dephosphorylates CpsD. Involved in the regulation of capsular polysaccharide biosynthesis. The sequence is that of Tyrosine-protein phosphatase CpsB (cpsB) from Streptococcus agalactiae serotype III (strain NEM316).